The chain runs to 788 residues: Integrin beta-6 (788 aa).

Residues 1–21 (MGIELLCFFFLFLGRDDHVRG) form the signal peptide. One can recognise a PSI domain in the interval 22–71 (GCAMEGAETCGDCLLIGPQCAWCSQENFTHPSGVSERCDTPANLLAKGCQ). At 22–709 (GCAMEGAETC…KDCPKPPNIP (688 aa)) the chain is on the extracellular side. Cystine bridges form between C23-C41, C31-C454, C34-C59, C44-C70, C197-C204, C252-C293, C394-C406, C426-C452, C456-C476, C467-C479, C481-C490, C492-C519, C502-C517, C511-C522, C524-C537, C539-C560, C544-C558, C552-C563, and C565-C574. N-linked (GlcNAc...) asparagine glycosylation is found at N48 and N97. Residues 131 to 371 (YPVDLYYLMD…QLIISAYEEL (241 aa)) form the VWFA domain. D140, S142, and S144 together coordinate Mg(2+). 4 residues coordinate Ca(2+): S144, D147, D148, and E179. The Ca(2+) site is built by N235, D237, P239, and E240. Position 240 (E240) interacts with Mg(2+). N-linked (GlcNAc...) asparagine glycosylation occurs at N260. 2 residues coordinate Ca(2+): D271 and K355. N-linked (GlcNAc...) asparagine glycans are attached at residues N387, N396, and N418. 4 consecutive I-EGF domains span residues 456–491 (CQKEVEVNSSKCHNGNGSYQCGVCACNPGHMGPHCE), 492–538 (CGED…PYCQ), 539–575 (CDNFSCVRHKGLLCGDNGDCECGECVCRSGWTGEYCN), and 576–615 (CTTSTDTCISEDGTLCSGRGDCVCGKCVCTNPGASGPTCE). N-linked (GlcNAc...) asparagine glycosylation is found at N463 and N471. Residue N541 is glycosylated (N-linked (GlcNAc...) asparagine). An N-linked (GlcNAc...) asparagine glycan is attached at N575. Disulfide bonds link C576-C599, C583-C597, C591-C602, C604-C614, C617-C620, C624-C670, C630-C649, C633-C645, and C678-C702. Residue N696 is glycosylated (N-linked (GlcNAc...) asparagine). The helical transmembrane segment at 710–730 (MIMLGVSLAILLIGVVLLCIW) threads the bilayer. An interaction with HAX1 region spans residues 731-758 (KLLVSFHDRKEVAKFEAERSKAKWQTGT). Residues 731–788 (KLLVSFHDRKEVAKFEAERSKAKWQTGTNPLYRGSTSTFKNVTYKHRDKLKTDLSTDG) lie on the Cytoplasmic side of the membrane.

It belongs to the integrin beta chain family. As to quaternary structure, heterodimer of an alpha and a beta subunit. Interacts with FLNB. Interacts with HAX1. ITGAV:ITGB6 interacts with FBN1. ITGAV:ITGB6 interacts with TGFB1.

The protein localises to the cell membrane. It is found in the cell junction. It localises to the focal adhesion. Its function is as follows. Integrin alpha-V:beta-6 (ITGAV:ITGB6) is a receptor for fibronectin and cytotactin. It recognizes the sequence R-G-D in its ligands. ITGAV:ITGB6 acts as a receptor for fibrillin-1 (FBN1) and mediates R-G-D-dependent cell adhesion to FBN1. Integrin alpha-V:beta-6 (ITGAV:ITGB6) mediates R-G-D-dependent release of transforming growth factor beta-1 (TGF-beta-1) from regulatory Latency-associated peptide (LAP), thereby playing a key role in TGF-beta-1 activation. The sequence is that of Integrin beta-6 (ITGB6) from Cavia porcellus (Guinea pig).